Reading from the N-terminus, the 329-residue chain is uncharacterized protein (329 aa).

Residues 1–32 (MSQDRGPRRPRRLEKCALISASATVLSLTASG) form the signal peptide. The N-palmitoyl cysteine moiety is linked to residue cysteine 33. A lipid anchor (S-diacylglycerol cysteine) is attached at cysteine 33.

It localises to the cell membrane. This is an uncharacterized protein from Streptomyces coelicolor (strain ATCC BAA-471 / A3(2) / M145).